Reading from the N-terminus, the 364-residue chain is Dual-specificity RNA methyltransferase RlmN (364 aa).

The active-site Proton acceptor is the Glu91. The 237-residue stretch at 97-333 (ESDRGTLCIS…VTVRKTRGDD (237 aa)) folds into the Radical SAM core domain. Residues Cys104 and Cys338 are joined by a disulfide bond. [4Fe-4S] cluster contacts are provided by Cys111, Cys115, and Cys118. Residues 164-165 (GE), Ser196, 218-220 (SLH), and Asn295 each bind S-adenosyl-L-methionine. The S-methylcysteine intermediate role is filled by Cys338.

It belongs to the radical SAM superfamily. RlmN family. It depends on [4Fe-4S] cluster as a cofactor.

The protein localises to the cytoplasm. It catalyses the reaction adenosine(2503) in 23S rRNA + 2 reduced [2Fe-2S]-[ferredoxin] + 2 S-adenosyl-L-methionine = 2-methyladenosine(2503) in 23S rRNA + 5'-deoxyadenosine + L-methionine + 2 oxidized [2Fe-2S]-[ferredoxin] + S-adenosyl-L-homocysteine. The enzyme catalyses adenosine(37) in tRNA + 2 reduced [2Fe-2S]-[ferredoxin] + 2 S-adenosyl-L-methionine = 2-methyladenosine(37) in tRNA + 5'-deoxyadenosine + L-methionine + 2 oxidized [2Fe-2S]-[ferredoxin] + S-adenosyl-L-homocysteine. Functionally, specifically methylates position 2 of adenine 2503 in 23S rRNA and position 2 of adenine 37 in tRNAs. m2A2503 modification seems to play a crucial role in the proofreading step occurring at the peptidyl transferase center and thus would serve to optimize ribosomal fidelity. The chain is Dual-specificity RNA methyltransferase RlmN from Neisseria meningitidis serogroup C / serotype 2a (strain ATCC 700532 / DSM 15464 / FAM18).